The primary structure comprises 267 residues: Ribosomal RNA small subunit methyltransferase A (267 aa).

S-adenosyl-L-methionine-binding residues include Asn-16, Leu-18, Gly-43, Glu-64, Asp-88, and Asn-109.

Belongs to the class I-like SAM-binding methyltransferase superfamily. rRNA adenine N(6)-methyltransferase family. RsmA subfamily.

It localises to the cytoplasm. The catalysed reaction is adenosine(1518)/adenosine(1519) in 16S rRNA + 4 S-adenosyl-L-methionine = N(6)-dimethyladenosine(1518)/N(6)-dimethyladenosine(1519) in 16S rRNA + 4 S-adenosyl-L-homocysteine + 4 H(+). Specifically dimethylates two adjacent adenosines (A1518 and A1519) in the loop of a conserved hairpin near the 3'-end of 16S rRNA in the 30S particle. May play a critical role in biogenesis of 30S subunits. This chain is Ribosomal RNA small subunit methyltransferase A, found in Acidithiobacillus ferrooxidans (strain ATCC 23270 / DSM 14882 / CIP 104768 / NCIMB 8455) (Ferrobacillus ferrooxidans (strain ATCC 23270)).